Here is a 672-residue protein sequence, read N- to C-terminus: MAAKPLLLPLLLLLHLSITLAQNDTNALTLFRLQTDTHGNLAGNWTGSDACTSSWQGVSCSPSSHRVTELSLPSLSLRGPLTSLSSLDQLRLLDLHDNRLNGTVSPLTNCKNLRLVYLAGNDLSGEIPKEISFLKRMIRLDLSDNNIRGVIPREILGFTRVLTIRIQNNELTGRIPDFSQMKSLLELNVSFNELHGNVSDGVVKKFGDLSFSGNEGLCGSDPLPVCTITNDPESSNTDQIVPSNPTSIPHSPVSVREPEIHSHRGIKPGIIAAVIGGCVAVIVLVSFGFAFCCGRLDRNGERSKSGSVETGFVGGGEGKRRSSYGEGGESDATSATDRSRLVFFERRKQFELDDLLKASAEMLGKGSLGTVYKAVLDDGSTTVAVKRLKDANPCPRKEFEQYMEIIGRLKHQNVVKLRAYYYAKEEKLLVYEYLPNGSLHSLLHGNRGPGRIPLDWTTRISLMLGAARGLAKIHDEYSISKIPHGNIKSSNVLLDRNGVALIADFGLSLLLNPVHAIARLGGYRAPEQSEIKRLSQKADVYSFGVLLLEVLTGKAPSIFPSPSRPRSAASVAVEEEEEAVVDLPKWVRSVVKEEWTAEVFDPELLRYKNIEEEMVAMLHIGLACVVPQPEKRPTMAEVVKMVEEIRVEQSPVGEDFDESRNSMSPSLATTDG.

Residues 1-21 (MAAKPLLLPLLLLLHLSITLA) form the signal peptide. At 22–269 (QNDTNALTLF…IHSHRGIKPG (248 aa)) the chain is on the extracellular side. 3 N-linked (GlcNAc...) asparagine glycosylation sites follow: N23, N44, and N101. Residues 87 to 110 (LDQLRLLDLHDNRLNGTVSPLTNC) form an LRR 1 repeat. K111 participates in a covalent cross-link: Glycyl lysine isopeptide (Lys-Gly) (interchain with G-Cter in ubiquitin). 4 LRR repeats span residues 112-134 (NLRLVYLAGNDLSGEIPKEISFL), 135-158 (KRMIRLDLSDNNIRGVIPREILGF), 160-181 (RVLTIRIQNNELTGRIPDFSQM), and 182-205 (KSLLELNVSFNELHGNVSDGVVKK). N-linked (GlcNAc...) asparagine glycans are attached at residues N188 and N197. Positions 233 to 249 (ESSNTDQIVPSNPTSIP) are enriched in polar residues. Residues 233–254 (ESSNTDQIVPSNPTSIPHSPVS) are disordered. A helical membrane pass occupies residues 270–290 (IIAAVIGGCVAVIVLVSFGFA). The Cytoplasmic segment spans residues 291-672 (FCCGRLDRNG…MSPSLATTDG (382 aa)). Residues 300 to 333 (GERSKSGSVETGFVGGGEGKRRSSYGEGGESDAT) form a disordered region. Positions 357–645 (KASAEMLGKG…AEVVKMVEEI (289 aa)) constitute a Protein kinase domain. ATP is bound by residues 363-371 (LGKGSLGTV) and K386. A disordered region spans residues 650 to 672 (SPVGEDFDESRNSMSPSLATTDG). Polar residues predominate over residues 661–672 (NSMSPSLATTDG).

It belongs to the protein kinase superfamily. Ser/Thr protein kinase family. Expressed in the vascular strands of cotyledons, the shoot apex, hypocotyls, roots, leaves, stems and flowers.

Its subcellular location is the cell membrane. Functionally, leucine-rich repeat receptor-like protein kinase involved in secondary cell wall formation in xylem fibers. May play a role in a regulatory network which also incorporates the TDR/PXY signaling pathway and regulates the maturation of interfascicular fiber cells. May promote the initiation of secondary cell wall deposition during the procedure of cell expansion. The chain is Leucine-rich repeat receptor-like protein kinase PXC1 from Arabidopsis thaliana (Mouse-ear cress).